The following is a 247-amino-acid chain: 3-deoxy-manno-octulosonate cytidylyltransferase (247 aa).

Belongs to the KdsB family.

It localises to the cytoplasm. It carries out the reaction 3-deoxy-alpha-D-manno-oct-2-ulosonate + CTP = CMP-3-deoxy-beta-D-manno-octulosonate + diphosphate. Its pathway is nucleotide-sugar biosynthesis; CMP-3-deoxy-D-manno-octulosonate biosynthesis; CMP-3-deoxy-D-manno-octulosonate from 3-deoxy-D-manno-octulosonate and CTP: step 1/1. It participates in bacterial outer membrane biogenesis; lipopolysaccharide biosynthesis. In terms of biological role, activates KDO (a required 8-carbon sugar) for incorporation into bacterial lipopolysaccharide in Gram-negative bacteria. In Leptospira interrogans serogroup Icterohaemorrhagiae serovar Lai (strain 56601), this protein is 3-deoxy-manno-octulosonate cytidylyltransferase.